Reading from the N-terminus, the 389-residue chain is Succinate--CoA ligase [ADP-forming] subunit beta (389 aa).

Residues lysine 46, glycine 53 to glycine 55, glutamate 99, cysteine 102, and glutamate 107 each bind ATP. Positions 199 and 213 each coordinate Mg(2+). Residues asparagine 264 and glycine 321–valine 323 each bind substrate.

Belongs to the succinate/malate CoA ligase beta subunit family. As to quaternary structure, heterotetramer of two alpha and two beta subunits. Mg(2+) serves as cofactor.

It carries out the reaction succinate + ATP + CoA = succinyl-CoA + ADP + phosphate. The catalysed reaction is GTP + succinate + CoA = succinyl-CoA + GDP + phosphate. The protein operates within carbohydrate metabolism; tricarboxylic acid cycle; succinate from succinyl-CoA (ligase route): step 1/1. Its function is as follows. Succinyl-CoA synthetase functions in the citric acid cycle (TCA), coupling the hydrolysis of succinyl-CoA to the synthesis of either ATP or GTP and thus represents the only step of substrate-level phosphorylation in the TCA. The beta subunit provides nucleotide specificity of the enzyme and binds the substrate succinate, while the binding sites for coenzyme A and phosphate are found in the alpha subunit. This chain is Succinate--CoA ligase [ADP-forming] subunit beta, found in Haemophilus influenzae (strain PittEE).